A 363-amino-acid chain; its full sequence is Spermidine/putrescine import ATP-binding protein PotA (363 aa).

Residues 6 to 236 (LEIRNVTRRF…PRSRFVADFI (231 aa)) enclose the ABC transporter domain. Residue 38–45 (GPSGCGKT) coordinates ATP.

Belongs to the ABC transporter superfamily. Spermidine/putrescine importer (TC 3.A.1.11.1) family. The complex is composed of two ATP-binding proteins (PotA), two transmembrane proteins (PotB and PotC) and a solute-binding protein (PotD).

It localises to the cell inner membrane. It catalyses the reaction ATP + H2O + polyamine-[polyamine-binding protein]Side 1 = ADP + phosphate + polyamineSide 2 + [polyamine-binding protein]Side 1.. Part of the ABC transporter complex PotABCD involved in spermidine/putrescine import. Responsible for energy coupling to the transport system. The polypeptide is Spermidine/putrescine import ATP-binding protein PotA (Pseudomonas aeruginosa (strain UCBPP-PA14)).